A 38-amino-acid polypeptide reads, in one-letter code: Bacteriocin BAC79 (38 aa).

Its activity is regulated as follows. The antimicrobial activity of BAC79 was completely lost after treatment with enzymes trypsin, pepsin, proteinase-K, and carboxypeptidase, while there was no loss of activity with either amylase or lipase. Its function is as follows. Has antibacterial activity against a wide spectrum of Gram-positive and Gram-negative bacteria, including L.monocytogenes which is inhibited through disruption of the cell membrane. In Weissella confusa (Lactobacillus confusus), this protein is Bacteriocin BAC79.